We begin with the raw amino-acid sequence, 382 residues long: UDP-4-amino-4-deoxy-L-arabinose--oxoglutarate aminotransferase (382 aa).

Lys183 carries the post-translational modification N6-(pyridoxal phosphate)lysine.

Belongs to the DegT/DnrJ/EryC1 family. ArnB subfamily. Homodimer. The cofactor is pyridoxal 5'-phosphate.

The catalysed reaction is UDP-4-amino-4-deoxy-beta-L-arabinose + 2-oxoglutarate = UDP-beta-L-threo-pentopyranos-4-ulose + L-glutamate. It participates in nucleotide-sugar biosynthesis; UDP-4-deoxy-4-formamido-beta-L-arabinose biosynthesis; UDP-4-deoxy-4-formamido-beta-L-arabinose from UDP-alpha-D-glucuronate: step 2/3. It functions in the pathway bacterial outer membrane biogenesis; lipopolysaccharide biosynthesis. Its function is as follows. Catalyzes the conversion of UDP-4-keto-arabinose (UDP-Ara4O) to UDP-4-amino-4-deoxy-L-arabinose (UDP-L-Ara4N). The modified arabinose is attached to lipid A and is required for resistance to polymyxin and cationic antimicrobial peptides. This chain is UDP-4-amino-4-deoxy-L-arabinose--oxoglutarate aminotransferase, found in Pseudomonas aeruginosa (strain UCBPP-PA14).